The sequence spans 266 residues: Type II pantothenate kinase (266 aa).

ATP is bound at residue 6–13 (DAGGTLIK). The active-site Proton acceptor is glutamate 70. ATP contacts are provided by residues threonine 99, 121 to 125 (GGMIQ), tyrosine 137, and serine 225.

The protein belongs to the type II pantothenate kinase family. Homodimer.

The protein resides in the cytoplasm. The enzyme catalyses (R)-pantothenate + ATP = (R)-4'-phosphopantothenate + ADP + H(+). Its pathway is cofactor biosynthesis; coenzyme A biosynthesis; CoA from (R)-pantothenate: step 1/5. In terms of biological role, catalyzes the phosphorylation of pantothenate (Pan), the first step in CoA biosynthesis. The sequence is that of Type II pantothenate kinase from Staphylococcus haemolyticus (strain JCSC1435).